A 196-amino-acid chain; its full sequence is Probable thymidylate kinase (196 aa).

Residue 9–16 (GIDGSGKT) coordinates ATP.

This sequence belongs to the thymidylate kinase family.

It carries out the reaction dTMP + ATP = dTDP + ADP. The chain is Probable thymidylate kinase from Methanococcus aeolicus (strain ATCC BAA-1280 / DSM 17508 / OCM 812 / Nankai-3).